Consider the following 536-residue polypeptide: Caspase recruitment domain-containing protein 9 (536 aa).

Residue Ser-2 is modified to Phosphoserine. Zn(2+)-binding residues include Asp-3, Cys-10, and His-73. Residues 6–98 form the CARD domain; that stretch reads NDDECWSTLE…QLYRKVTGKE (93 aa). The tract at residues 99–116 is linker; that stretch reads PARVFSMIIDASGESGLT. A coiled-coil region spans residues 117-272; that stretch reads QLLMTEVMKL…ELQVSVQEGK (156 aa). Lys-125 is covalently cross-linked (Glycyl lysine isopeptide (Lys-Gly) (interchain with G-Cter in ubiquitin)). Position 231 is a phosphothreonine; by PKC/PRKCD (Thr-231). Ser-277 is subject to Phosphoserine. A coiled-coil region spans residues 303-415; sequence SLRKDLRQAE…LLAAEGRLKQ (113 aa). Phosphoserine occurs at positions 424, 425, 431, 451, 461, 483, and 498. The disordered stretch occupies residues 425–451; it reads SDLEDSSPRNSQELSLPQDLEEDAQLS. A disordered region spans residues 476-536; it reads LTHGMGPSSS…GSDNTDTEGS (61 aa). Over residues 487–502 the composition is skewed to basic and acidic residues; it reads PPEKERRRLKESFENY. Thr-531 and Thr-533 each carry phosphothreonine; by CK2.

Monomer. Homodimer; homodimerization is mediated by the CARD domain which forms an extensive interaction with the adjacent linker and coiled-coil regions; leads to an autoinhibited state. Homomultimer; polymerizes following activation, forming a nucleating helical template that seeds BCL10-filament formation via a CARD-CARD interaction. Interacts (via CARD domain) with BCL10 (via CARD domain); interaction takes place following CARD9 activation and polymerization, leading to the formation of a filamentous CBM complex assembly. Component of a CBM complex (CARD9-BCL10, MALT1), composed of CARD9, BCL10 and MALT1. Interacts with RASGRF1. Interacts with NOD2 (via NACHT domain); interaction is direct. Interacts with RIPK2. Interacts with VHL; without leading to protein degradation. In terms of processing, phosphorylated at Thr-231 by PRKCD downstream of C-type lectin receptors activation: phosphorylation promotes interaction with BCL10, followed by activation of NF-kappa-B and MAP kinase p38 pathways. Phosphorylated at Thr-531 and Thr-531 by CK2 following interaction with VHL, leading to inhibit the ability to activate NF-kappa-B. Ubiquitinated at Lys-125 via 'Lys-27'-linked ubiquitin by TRIM62 downstream of C-type lectin receptors activation; leading to CARD9 activation, followed by activation of NF-kappa-B and MAP kinase p38 pathways. Deubiquitinated at Lys-125 by USP15, inhibiting CARD9. As to expression, specifically expressed in myeloid cells. Not expressed in non-lymphoid organs.

It localises to the cytoplasm. With respect to regulation, maintained in an autoinhibited state via homodimerization in which the CARD domain forms an extensive interaction with the adjacent linker and coiled-coil regions. Activation downstream of C-type lectin receptors, by phosphorylation by PRKCD and/or ubiquitination by TRIM62, triggers disruption of the CARD domain-coiled coil interface, CARD9 homooligomerization and BCL10 recruitment, followed by activation of NF-kappa-B and MAP kinase p38 pathways. Zinc-binding inhibits activation by stabilizing the CARD ground-state conformation and restricting its capacity to form BCL10-nucleating filaments. Functionally, adapter protein that plays a key role in innate immune response against fungi by forming signaling complexes downstream of C-type lectin receptors. CARD9-mediated signals are essential for antifungal immunity against a subset of fungi from the phylum Ascomycota. Transduces signals in myeloid cells downstream of C-type lectin receptors CLEC7A (dectin-1), CLEC6A (dectin-2) and CLEC4E (Mincle), which detect pathogen-associated molecular pattern metabolites (PAMPs), such as fungal carbohydrates, and trigger CARD9 activation. Upon activation, CARD9 homooligomerizes to form a nucleating helical template that recruits BCL10 via CARD-CARD interaction, thereby promoting polymerization of BCL10 and subsequent recruitment of MALT1: this leads to activation of NF-kappa-B and MAP kinase p38 (MAPK11, MAPK12, MAPK13 and/or MAPK14) pathways which stimulate expression of genes encoding pro-inflammatory cytokines and chemokines. CARD9 signaling in antigen-presenting cells links innate sensing of fungi to the activation of adaptive immunity and provides a cytokine milieu that induces the development and subsequent of interleukin 17-producing T helper (Th17) cells. Also involved in activation of myeloid cells via classical ITAM-associated receptors and TLR: required for TLR-mediated activation of MAPK, while it is not required for TLR-induced activation of NF-kappa-B. CARD9 can also be engaged independently of BCL10: forms a complex with RASGRF1 downstream of C-type lectin receptors, which recruits and activates HRAS, leading to ERK activation and the production of cytokines. Acts as an important regulator of the intestinal commensal fungi (mycobiota) component of the gut microbiota. Plays an essential role in antifungal immunity against dissemination of gut fungi: acts by promoting induction of antifungal IgG antibodies response in CX3CR1(+) macrophages to confer protection against disseminated C.albicans or C.auris infection. Also mediates immunity against other pathogens, such as certain bacteria, viruses and parasites; CARD9 signaling is however redundant with other innate immune responses. In response to L.monocytogenes infection, required for the production of inflammatory cytokines activated by intracellular peptidoglycan: acts by connecting NOD2 recognition of peptidoglycan to downstream activation of MAP kinases (MAPK) without activating NF-kappa-B. This Mus musculus (Mouse) protein is Caspase recruitment domain-containing protein 9.